Here is a 251-residue protein sequence, read N- to C-terminus: Pyrroloquinoline-quinone synthase (251 aa).

It belongs to the PqqC family.

The catalysed reaction is 6-(2-amino-2-carboxyethyl)-7,8-dioxo-1,2,3,4,7,8-hexahydroquinoline-2,4-dicarboxylate + 3 O2 = pyrroloquinoline quinone + 2 H2O2 + 2 H2O + H(+). It functions in the pathway cofactor biosynthesis; pyrroloquinoline quinone biosynthesis. In terms of biological role, ring cyclization and eight-electron oxidation of 3a-(2-amino-2-carboxyethyl)-4,5-dioxo-4,5,6,7,8,9-hexahydroquinoline-7,9-dicarboxylic-acid to PQQ. The polypeptide is Pyrroloquinoline-quinone synthase (Pseudomonas entomophila (strain L48)).